The primary structure comprises 75 residues: UPF0291 protein Teth39_0326 (75 aa).

This sequence belongs to the UPF0291 family.

Its subcellular location is the cytoplasm. The chain is UPF0291 protein Teth39_0326 from Thermoanaerobacter pseudethanolicus (strain ATCC 33223 / 39E) (Clostridium thermohydrosulfuricum).